Consider the following 352-residue polypeptide: UPF0252 protein MJ1282 (352 aa).

It belongs to the UPF0252 family.

The sequence is that of UPF0252 protein MJ1282 from Methanocaldococcus jannaschii (strain ATCC 43067 / DSM 2661 / JAL-1 / JCM 10045 / NBRC 100440) (Methanococcus jannaschii).